The chain runs to 309 residues: Methionyl-tRNA formyltransferase (309 aa).

112-115 lines the (6S)-5,6,7,8-tetrahydrofolate pocket; sequence SLLP.

This sequence belongs to the Fmt family.

The catalysed reaction is L-methionyl-tRNA(fMet) + (6R)-10-formyltetrahydrofolate = N-formyl-L-methionyl-tRNA(fMet) + (6S)-5,6,7,8-tetrahydrofolate + H(+). Attaches a formyl group to the free amino group of methionyl-tRNA(fMet). The formyl group appears to play a dual role in the initiator identity of N-formylmethionyl-tRNA by promoting its recognition by IF2 and preventing the misappropriation of this tRNA by the elongation apparatus. This Bartonella bacilliformis (strain ATCC 35685 / KC583 / Herrer 020/F12,63) protein is Methionyl-tRNA formyltransferase.